A 252-amino-acid chain; its full sequence is 5'-nucleotidase SurE (252 aa).

Aspartate 8, aspartate 9, serine 39, and asparagine 91 together coordinate a divalent metal cation.

The protein belongs to the SurE nucleotidase family. A divalent metal cation serves as cofactor.

Its subcellular location is the cytoplasm. The catalysed reaction is a ribonucleoside 5'-phosphate + H2O = a ribonucleoside + phosphate. Nucleotidase that shows phosphatase activity on nucleoside 5'-monophosphates. This Variovorax paradoxus (strain S110) protein is 5'-nucleotidase SurE.